The chain runs to 251 residues: Hydroxyacylglutathione hydrolase (251 aa).

7 residues coordinate Zn(2+): His-53, His-55, Asp-57, His-58, His-110, Asp-127, and His-165.

It belongs to the metallo-beta-lactamase superfamily. Glyoxalase II family. As to quaternary structure, monomer. Zn(2+) serves as cofactor.

It catalyses the reaction an S-(2-hydroxyacyl)glutathione + H2O = a 2-hydroxy carboxylate + glutathione + H(+). Its pathway is secondary metabolite metabolism; methylglyoxal degradation; (R)-lactate from methylglyoxal: step 2/2. Thiolesterase that catalyzes the hydrolysis of S-D-lactoyl-glutathione to form glutathione and D-lactic acid. The polypeptide is Hydroxyacylglutathione hydrolase (Pectobacterium carotovorum subsp. carotovorum (strain PC1)).